The primary structure comprises 183 residues: Ribosome-recycling factor (183 aa).

Belongs to the RRF family.

Its subcellular location is the cytoplasm. Functionally, responsible for the release of ribosomes from messenger RNA at the termination of protein biosynthesis. May increase the efficiency of translation by recycling ribosomes from one round of translation to another. This Mycoplasma genitalium (strain ATCC 33530 / DSM 19775 / NCTC 10195 / G37) (Mycoplasmoides genitalium) protein is Ribosome-recycling factor.